A 174-amino-acid chain; its full sequence is Bifunctional protein PyrR (174 aa).

Substrate contacts are provided by residues 38-39, 95-103, and Arg-128; these read SG and DDVLATGRT. The short motif at 91 to 103 is the PRPP-binding element; it reads ILLVDDVLATGRT.

It belongs to the purine/pyrimidine phosphoribosyltransferase family. PyrR subfamily.

It catalyses the reaction UMP + diphosphate = 5-phospho-alpha-D-ribose 1-diphosphate + uracil. Regulates the transcription of the pyrimidine nucleotide (pyr) operon in response to exogenous pyrimidines. Functionally, also displays a weak uracil phosphoribosyltransferase activity which is not physiologically significant. The protein is Bifunctional protein PyrR of Ralstonia nicotianae (strain ATCC BAA-1114 / GMI1000) (Ralstonia solanacearum).